The chain runs to 189 residues: UPF0301 protein PSEEN5058 (189 aa).

Belongs to the UPF0301 (AlgH) family.

This is UPF0301 protein PSEEN5058 from Pseudomonas entomophila (strain L48).